We begin with the raw amino-acid sequence, 219 residues long: Large ribosomal subunit protein bL25 (219 aa).

The tract at residues 193–219 (VSSTELEETPEVPASAVPTTDQGESAE) is disordered. Positions 209–219 (VPTTDQGESAE) are enriched in polar residues.

This sequence belongs to the bacterial ribosomal protein bL25 family. CTC subfamily. Part of the 50S ribosomal subunit; part of the 5S rRNA/L5/L18/L25 subcomplex. Contacts the 5S rRNA. Binds to the 5S rRNA independently of L5 and L18.

Its function is as follows. This is one of the proteins that binds to the 5S RNA in the ribosome where it forms part of the central protuberance. This Legionella pneumophila (strain Corby) protein is Large ribosomal subunit protein bL25.